A 295-amino-acid chain; its full sequence is Protease Rv3090 (295 aa).

2 consecutive transmembrane segments (helical) span residues 2–22 and 37–57; these read TWQIVFVVICVIVAGVAALFW and VTIAAVAAAAVFFFLGCFTIV.

The protein resides in the cell membrane. The protein localises to the secreted. It localises to the cell wall. Functionally, protease that triggers late cell apoptosis and contributes to the pathogenicity and dissemination of M.tuberculosis. In a mouse model of infection, can induce hepatocyte and lung cell apoptosis and cause pathological damage to the spleen, liver and lungs. Specifically stimulates the secretion of inflammatory cytokines including TNF-alpha, IL-6 and IL-1 beta. Can degrade casein in vitro. In Mycobacterium tuberculosis (strain ATCC 25618 / H37Rv), this protein is Protease Rv3090.